The following is a 523-amino-acid chain: Pentatricopeptide repeat-containing protein At1g52640, mitochondrial (523 aa).

A mitochondrion-targeting transit peptide spans 1-5 (MAIRT). PPR repeat units lie at residues 101-135 (SLES…NYFE), 137-171 (SSKV…GIKP), 172-206 (CVDD…GIVP), 207-241 (SAKT…NCVV), 242-276 (DLLA…GLKP), 277-311 (DAYS…DLVP), 312-346 (NVYT…GANP), 347-381 (DTWT…KCLP), 382-416 (DRHT…KFYP), and 417-452 (TVAT…GIPP). Positions 498 to 523 (KRRRLGRRSENSEDDDDDFELERDTI) are disordered. The span at 509–523 (SEDDDDDFELERDTI) shows a compositional bias: acidic residues.

Belongs to the PPR family. P subfamily.

It is found in the mitochondrion. The chain is Pentatricopeptide repeat-containing protein At1g52640, mitochondrial from Arabidopsis thaliana (Mouse-ear cress).